The sequence spans 109 residues: Nucleoid-associated protein LBUL_1514 (109 aa).

Belongs to the YbaB/EbfC family. In terms of assembly, homodimer.

It is found in the cytoplasm. Its subcellular location is the nucleoid. Binds to DNA and alters its conformation. May be involved in regulation of gene expression, nucleoid organization and DNA protection. This Lactobacillus delbrueckii subsp. bulgaricus (strain ATCC BAA-365 / Lb-18) protein is Nucleoid-associated protein LBUL_1514.